A 443-amino-acid polypeptide reads, in one-letter code: Trigger factor (443 aa).

In terms of domain architecture, PPIase FKBP-type spans 163 to 249; sequence KDAAIIDYQA…LKSLKEEILP (87 aa).

It belongs to the FKBP-type PPIase family. Tig subfamily.

Its subcellular location is the cytoplasm. It carries out the reaction [protein]-peptidylproline (omega=180) = [protein]-peptidylproline (omega=0). Involved in protein export. Acts as a chaperone by maintaining the newly synthesized protein in an open conformation. Functions as a peptidyl-prolyl cis-trans isomerase. The chain is Trigger factor from Desulfosudis oleivorans (strain DSM 6200 / JCM 39069 / Hxd3) (Desulfococcus oleovorans).